Consider the following 145-residue polypeptide: D-aminoacyl-tRNA deacylase (145 aa).

A Gly-cisPro motif, important for rejection of L-amino acids motif is present at residues 137–138 (GP).

This sequence belongs to the DTD family. As to quaternary structure, homodimer.

It is found in the cytoplasm. The enzyme catalyses glycyl-tRNA(Ala) + H2O = tRNA(Ala) + glycine + H(+). It carries out the reaction a D-aminoacyl-tRNA + H2O = a tRNA + a D-alpha-amino acid + H(+). Its function is as follows. An aminoacyl-tRNA editing enzyme that deacylates mischarged D-aminoacyl-tRNAs. Also deacylates mischarged glycyl-tRNA(Ala), protecting cells against glycine mischarging by AlaRS. Acts via tRNA-based rather than protein-based catalysis; rejects L-amino acids rather than detecting D-amino acids in the active site. By recycling D-aminoacyl-tRNA to D-amino acids and free tRNA molecules, this enzyme counteracts the toxicity associated with the formation of D-aminoacyl-tRNA entities in vivo and helps enforce protein L-homochirality. The polypeptide is D-aminoacyl-tRNA deacylase (Escherichia coli O139:H28 (strain E24377A / ETEC)).